The primary structure comprises 472 residues: MATKCTKCGPGYATPLEAMKGPREEIVYLPCIYRNTGIEAPDYLATVDVDPKSPHYSQVIHRLPMPHLKDELHHSGWNTCSSCFGDSTKSRDKLILPSIISSRIYVVDVGSEPRAPKLHKVIEPNEIHAKCNLGNLHTSHCLASGEVMISSLGDPQGNGKGGFVLLDGETFEVKGTWEKPGGEAPMGYDFWYQPRHNIMVSTEWAAPNVFKDGFNPAHVEAGLYGSHIHVWDWQRHEIIQTLQMKDGLIPLEIRFLHDPDATQGFVGCALSSNIQRFYKNEGGTWSVEKVIQVPSKKVKGWMLPEMPGLITDILLSLDDRFLYFSNWLHGDIRQYDISNPKKPRLTGQIFLGGSIVKGGSVQVLEDQELTCQPEPLVVKGKRVPGGPQMIQLSLDGKRLYVTTSLYSAWDKQFYPNLIREGSVMLQIDVDTANGGLKLNPNFLVDFGKEPLGPALAHELRYPGGDCSSDIWI.

Ala-2 is subject to N-acetylalanine. 2 positions are modified to phosphoserine: Ser-111 and Ser-467.

Belongs to the selenium-binding protein family. As to quaternary structure, interacts with USP33. The N-terminus is blocked. Present in liver and colon (at protein level).

Its subcellular location is the nucleus. It localises to the cytoplasm. The protein resides in the cytosol. It is found in the membrane. The enzyme catalyses methanethiol + O2 + H2O = hydrogen sulfide + formaldehyde + H2O2 + H(+). Its pathway is organosulfur degradation. In terms of biological role, catalyzes the oxidation of methanethiol, an organosulfur compound known to be produced in substantial amounts by gut bacteria. Selenium-binding protein which may be involved in the sensing of reactive xenobiotics in the cytoplasm. May be involved in intra-Golgi protein transport. The polypeptide is Methanethiol oxidase (Selenbp1) (Rattus norvegicus (Rat)).